The following is a 122-amino-acid chain: Holo-[acyl-carrier-protein] synthase (122 aa).

Residues Asp-8 and Glu-60 each contribute to the Mg(2+) site.

Belongs to the P-Pant transferase superfamily. AcpS family. The cofactor is Mg(2+).

Its subcellular location is the cytoplasm. It carries out the reaction apo-[ACP] + CoA = holo-[ACP] + adenosine 3',5'-bisphosphate + H(+). Functionally, transfers the 4'-phosphopantetheine moiety from coenzyme A to a Ser of acyl-carrier-protein. The protein is Holo-[acyl-carrier-protein] synthase of Anaplasma phagocytophilum (strain HZ).